Here is a 311-residue protein sequence, read N- to C-terminus: tRNA-cytidine(32) 2-sulfurtransferase (311 aa).

A PP-loop motif motif is present at residues Ser-47–Ser-52. [4Fe-4S] cluster contacts are provided by Cys-122, Cys-125, and Cys-213.

Belongs to the TtcA family. In terms of assembly, homodimer. Requires Mg(2+) as cofactor. [4Fe-4S] cluster is required as a cofactor.

It localises to the cytoplasm. It carries out the reaction cytidine(32) in tRNA + S-sulfanyl-L-cysteinyl-[cysteine desulfurase] + AH2 + ATP = 2-thiocytidine(32) in tRNA + L-cysteinyl-[cysteine desulfurase] + A + AMP + diphosphate + H(+). The protein operates within tRNA modification. Its function is as follows. Catalyzes the ATP-dependent 2-thiolation of cytidine in position 32 of tRNA, to form 2-thiocytidine (s(2)C32). The sulfur atoms are provided by the cysteine/cysteine desulfurase (IscS) system. This Salmonella paratyphi B (strain ATCC BAA-1250 / SPB7) protein is tRNA-cytidine(32) 2-sulfurtransferase.